We begin with the raw amino-acid sequence, 152 residues long: Protein SprT-like (152 aa).

Positions 7–148 (QRLVEEVSLQ…GKCKGKLILI (142 aa)) constitute a SprT-like domain. Residue His-67 participates in Zn(2+) binding. Glu-68 is a catalytic residue. His-71 serves as a coordination point for Zn(2+).

This sequence belongs to the SprT family. Zn(2+) is required as a cofactor.

The protein resides in the cytoplasm. The polypeptide is Protein SprT-like (Bacillus cereus (strain ATCC 10987 / NRS 248)).